We begin with the raw amino-acid sequence, 147 residues long: MEIILKEDVVNLGYKNDIVTVKSGYGRNYLIPTGKAVIASPSAKKMLAEELKQRAHKLEKIKKDAEAVAAKLEGVSLTIATKVSSTGTIFGSVGNIQIAEELAKLGHEIDRKIIVVKDAVKEVGAYKAIVKLHKEVSVEIPFEVVAE.

This sequence belongs to the bacterial ribosomal protein bL9 family.

Its function is as follows. Binds to the 23S rRNA. This Bacteroides fragilis (strain YCH46) protein is Large ribosomal subunit protein bL9.